Consider the following 735-residue polypeptide: Disintegrin and metalloproteinase domain-containing protein 2 (735 aa).

A signal peptide spans 1–16; the sequence is MWRVLFLLSGLGGLRM. Positions 17–174 are excised as a propeptide; the sequence is DSNFDSLPVQ…FKLQSVEPQQ (158 aa). N-linked (GlcNAc...) asparagine glycans are attached at residues Asn-122 and Asn-220. At 175-686 the chain is on the extracellular side; that stretch reads DFAKYIEMHV…ENIYHSKPMR (512 aa). The region spanning 178-375 is the Peptidase M12B domain; sequence KYIEMHVIVE…QKSQCLHNQP (198 aa). Intrachain disulfides connect Cys-287-Cys-370, Cys-329-Cys-354, Cys-331-Cys-336, and Cys-445-Cys-465. 3 N-linked (GlcNAc...) asparagine glycosylation sites follow: Asn-353, Asn-459, and Asn-566. A Disintegrin domain is found at 384 to 473; sequence QAVCGNAKLE…SCPENHYVQT (90 aa). The EGF-like domain occupies 612 to 645; the sequence is LGYDCTTDKCNDRGVCNNKKHCHCSASYLPPDCS. 3 disulfides stabilise this stretch: Cys-616–Cys-627, Cys-621–Cys-633, and Cys-635–Cys-644. A helical membrane pass occupies residues 687–707; the sequence is WPFFLFIPFFIIFCVLIAIMV. Residues 708 to 735 lie on the Cytoplasmic side of the membrane; the sequence is KVNFQRKKWRTEDYSSDEQPESESEPKG. Position 729 is a phosphoserine (Ser-729).

The prodomain and the metalloprotease domain are cleaved during the epididymal maturation of the spermatozoa. As to expression, expressed specifically in spermatogenic cells in the seminiferous cells. Not detected in fetal tissues.

It is found in the membrane. Functionally, sperm surface membrane protein that may be involved in sperm-egg plasma membrane adhesion and fusion during fertilization. Could have a direct role in sperm-zona binding or migration of sperm from the uterus into the oviduct. Interactions with egg membrane could be mediated via binding between its disintegrin-like domain to one or more integrins receptors on the egg. This is a non catalytic metalloprotease-like protein. The chain is Disintegrin and metalloproteinase domain-containing protein 2 (ADAM2) from Homo sapiens (Human).